The primary structure comprises 281 residues: Pantothenate synthetase (281 aa).

ATP is bound at residue 26-33; it reads MGSLHEGH. His33 (proton donor) is an active-site residue. Residue Gln57 coordinates (R)-pantoate. Gln57 lines the beta-alanine pocket. 144–147 serves as a coordination point for ATP; it reads GKKD. Position 150 (Gln150) interacts with (R)-pantoate. ATP is bound by residues Ala173 and 181–184; that span reads LSSR.

It belongs to the pantothenate synthetase family. As to quaternary structure, homodimer.

The protein resides in the cytoplasm. The enzyme catalyses (R)-pantoate + beta-alanine + ATP = (R)-pantothenate + AMP + diphosphate + H(+). The protein operates within cofactor biosynthesis; (R)-pantothenate biosynthesis; (R)-pantothenate from (R)-pantoate and beta-alanine: step 1/1. Its function is as follows. Catalyzes the condensation of pantoate with beta-alanine in an ATP-dependent reaction via a pantoyl-adenylate intermediate. This Methylibium petroleiphilum (strain ATCC BAA-1232 / LMG 22953 / PM1) protein is Pantothenate synthetase.